Reading from the N-terminus, the 345-residue chain is 4-hydroxyproline 2-epimerase (345 aa).

A substrate-binding site is contributed by Gln-85. Residue Ser-93 is the Proton acceptor of the active site. Substrate is bound by residues 94-95 (GS) and Asp-251. The Proton donor role is filled by Cys-255. 256 to 257 (GT) contributes to the substrate binding site.

The protein belongs to the proline racemase family.

It catalyses the reaction trans-4-hydroxy-L-proline = cis-4-hydroxy-D-proline. Its function is as follows. Catalyzes the epimerization of trans-4-hydroxy-L-proline (t4LHyp) to cis-4-hydroxy-D-proline (c4DHyp). May be involved in a degradation pathway of t4LHyp, which would allow A.tumefaciens to grow on t4LHyp as a sole carbon source. Can also catalyze the epimerization of trans-3-hydroxy-L-proline (t3LHyp) to cis-3-hydroxy-D-proline (c3DHyp) in vitro. Displays no proline racemase activity. This Agrobacterium fabrum (strain C58 / ATCC 33970) (Agrobacterium tumefaciens (strain C58)) protein is 4-hydroxyproline 2-epimerase.